The following is a 30-amino-acid chain: Sperm protamine P5 (30 aa).

The interval 1–30 is disordered; sequence YRRRRRRGRRGRRRRGRRRRSRGRRRAHGG.

In terms of tissue distribution, testis.

Its subcellular location is the nucleus. The protein resides in the chromosome. Functionally, protamines substitute for histones in the chromatin of sperm during the haploid phase of spermatogenesis. They compact sperm DNA into a highly condensed, stable and inactive complex. This Octopus vulgaris (Common octopus) protein is Sperm protamine P5.